We begin with the raw amino-acid sequence, 473 residues long: MKTDTPSLETPQAARLRRRQLIRQLLERDKTPLAILFMAAVVGTLVGLAAVAFDKGVAWLQNQRMGALVHTADNYPLLLTVAFLCSAVLAMFGYFLVRKYAPEAGGSGIPEIEGALEDQRPVRWWRVLPVKFFGGLGTLGGGMVLGREGPTVQIGGNIGRMVLDIFRLKGDEARHTLLATGAAAGLAAAFNAPLAGILFIIEEMRPQFRYTLISIKAVFIGVIMSTIMYRIFNHEVALIDVGKLSDAPLNTLWLYLILGIIFGIFGPIFNKWVLGMQDLLHRVHGGNITKWVLMGGAIGGLCGLLGFVAPATSGGGFNLIPIATAGNFSMGMLVFIFVARVITTLLCFSSGAPGGIFAPMLALGTVLGTAFGMVAVELFPQYHLEAGTFAIAGMGALLAASIRAPLTGIILVLEMTDNYQLILPMIITGLGATLLAQFTGGKPLYSAILARTLAKQEAEQLARSKAASASENT.

Over 1 to 32 (MKTDTPSLETPQAARLRRRQLIRQLLERDKTP) the chain is Cytoplasmic. The helical transmembrane segment at 33–69 (LAILFMAAVVGTLVGLAAVAFDKGVAWLQNQRMGALV) threads the bilayer. Residues 70-76 (HTADNYP) lie on the Periplasmic side of the membrane. A helical transmembrane segment spans residues 77-100 (LLLTVAFLCSAVLAMFGYFLVRKY). The short motif at 106 to 110 (GSGIP) is the Selectivity filter part_1 element. Chloride is bound at residue S107. An intramembrane region (helical) is located at residues 109 to 116 (IPEIEGAL). Residues 117-123 (EDQRPVR) are Cytoplasmic-facing. Helical transmembrane passes span 124–141 (WWRV…TLGG) and 148–166 (EGPT…LDIF). Positions 146-150 (GREGP) match the Selectivity filter part_2 motif. Over 167 to 176 (RLKGDEARHT) the chain is Cytoplasmic. 2 intramembrane regions (helical) span residues 177–189 (LLAT…LAAA) and 193–201 (PLAGILFII). Topologically, residues 202–214 (EEMRPQFRYTLIS) are cytoplasmic. A helical membrane pass occupies residues 215 to 232 (IKAVFIGVIMSTIMYRIF). Topologically, residues 233-252 (NHEVALIDVGKLSDAPLNTL) are periplasmic. The chain crosses the membrane as a helical span at residues 253 to 281 (WLYLILGIIFGIFGPIFNKWVLGMQDLLH). Over 282–287 (RVHGGN) the chain is Cytoplasmic. A helical transmembrane segment spans residues 288–309 (ITKWVLMGGAIGGLCGLLGFVA). The Periplasmic segment spans residues 310-329 (PATSGGGFNLIPIATAGNFS). The next 2 helical transmembrane spans lie at 330–349 (MGML…LCFS) and 355–376 (GIFA…MVAV). Residues 355–359 (GIFAP) carry the Selectivity filter part_3 motif. Chloride-binding residues include I356 and F357. Topologically, residues 377–386 (ELFPQYHLEA) are periplasmic. The segment at residues 387–401 (GTFAIAGMGALLAAS) is an intramembrane region (helical). Residues 402 to 404 (IRA) constitute an intramembrane region (note=Loop between two helices). Positions 405-416 (PLTGIILVLEMT) form an intramembrane region, helical. The note=Loop between two helices intramembrane region spans 417–421 (DNYQL). A helical transmembrane segment spans residues 422 to 438 (ILPMIITGLGATLLAQF). Topologically, residues 439–473 (TGGKPLYSAILARTLAKQEAEQLARSKAASASENT) are cytoplasmic. Residue Y445 participates in chloride binding.

This sequence belongs to the chloride channel (TC 2.A.49) family. ClcA subfamily. Homodimer.

The protein localises to the cell inner membrane. The enzyme catalyses 2 chloride(in) + H(+)(out) = 2 chloride(out) + H(+)(in). Proton-coupled chloride transporter. Functions as antiport system and exchanges two chloride ions for 1 proton. Probably acts as an electrical shunt for an outwardly-directed proton pump that is linked to amino acid decarboxylation, as part of the extreme acid resistance (XAR) response. This is H(+)/Cl(-) exchange transporter ClcA from Escherichia coli O139:H28 (strain E24377A / ETEC).